Consider the following 89-residue polypeptide: Small ribosomal subunit protein uS15 (89 aa).

This sequence belongs to the universal ribosomal protein uS15 family. Part of the 30S ribosomal subunit. Forms a bridge to the 50S subunit in the 70S ribosome, contacting the 23S rRNA.

In terms of biological role, one of the primary rRNA binding proteins, it binds directly to 16S rRNA where it helps nucleate assembly of the platform of the 30S subunit by binding and bridging several RNA helices of the 16S rRNA. Forms an intersubunit bridge (bridge B4) with the 23S rRNA of the 50S subunit in the ribosome. This is Small ribosomal subunit protein uS15 from Frankia casuarinae (strain DSM 45818 / CECT 9043 / HFP020203 / CcI3).